Reading from the N-terminus, the 430-residue chain is KIN17-like protein (430 aa).

A C2H2-type zinc finger spans residues 28-50; sequence CQMCQKQCRDENGFKCHCMSESH. A winged helix-turn-helix (wHTH) region spans residues 51 to 160; the sequence is QRQMQVFGQA…KARLKRKRIK (110 aa). A coiled-coil region spans residues 147–183; the sequence is EQAVKARLKRKRIKSDLAEDERQERMIARQIERAQQS. The short motif at 155 to 158 is the Nuclear localization signal (NLS) element; sequence KRKR. Disordered regions lie at residues 179 to 230 and 261 to 284; these read RAQQ…ANKA and EEEDEVSARDKEKEELAKKKGKDA. The segment covering 191–224 has biased composition (acidic residues); that stretch reads LGDDASPDGSEGESGSEDEYSDSENDHEGQEEDA. The segment covering 261–278 has biased composition (basic and acidic residues); it reads EEEDEVSARDKEKEELAK. The stretch at 283–312 forms a coiled coil; the sequence is DAINAAEARRSALDELMKEEEKAKERSNRK. The interval 319 to 370 is C-terminal subdomain A; it reads GIVVKVMSKSLAEKGYCKQKGVVKRVIDKYVGEIEMLESKHVLRVDQDELET. A C-terminal subdomain B region spans residues 376–427; the sequence is GGLVRIVNGAYRGSNARLLSVDTERFCAKVQVEKGLYDGKVLKAIEYEDICK.

The protein belongs to the KIN17 family.

The protein localises to the nucleus. In Oryza sativa subsp. japonica (Rice), this protein is KIN17-like protein.